A 216-amino-acid polypeptide reads, in one-letter code: Cytochrome c oxidase assembly protein CtaG (216 aa).

Low complexity predominate over residues 1–23 (MTDAPQHPQQPATGTPATPKAAP). The segment at 1-24 (MTDAPQHPQQPATGTPATPKAAPR) is disordered. The Cytoplasmic portion of the chain corresponds to 1–26 (MTDAPQHPQQPATGTPATPKAAPRVG). A helical; Signal-anchor for type II membrane protein transmembrane segment spans residues 27 to 49 (RDVRIGATCGLLVALMVGAAYAA). Residues 50–216 (VPFYNWFCRA…SEPDRPGGSI (167 aa)) are Periplasmic-facing.

This sequence belongs to the COX11/CtaG family.

It is found in the cell inner membrane. In terms of biological role, exerts its effect at some terminal stage of cytochrome c oxidase synthesis, probably by being involved in the insertion of the copper B into subunit I. This Nitrobacter hamburgensis (strain DSM 10229 / NCIMB 13809 / X14) protein is Cytochrome c oxidase assembly protein CtaG.